A 447-amino-acid polypeptide reads, in one-letter code: Argininosuccinate synthase (447 aa).

ATP is bound by residues 17 to 25 (AFSGGLDTS) and Ala43. Tyr99 is a binding site for L-citrulline. Residues Gly129 and Thr131 each contribute to the ATP site. L-aspartate contacts are provided by Thr131, Asn135, and Asp136. Asn135 is a binding site for L-citrulline. Asp136 serves as a coordination point for ATP. L-citrulline contacts are provided by Arg139 and Ser192. Residue Asp194 coordinates ATP. 3 residues coordinate L-citrulline: Thr201, Glu203, and Glu280.

This sequence belongs to the argininosuccinate synthase family. Type 2 subfamily. Homotetramer.

It localises to the cytoplasm. The enzyme catalyses L-citrulline + L-aspartate + ATP = 2-(N(omega)-L-arginino)succinate + AMP + diphosphate + H(+). Its pathway is amino-acid biosynthesis; L-arginine biosynthesis; L-arginine from L-ornithine and carbamoyl phosphate: step 2/3. The protein is Argininosuccinate synthase of Klebsiella pneumoniae (strain 342).